A 174-amino-acid chain; its full sequence is MTNISVIAKPYAKAAFEFANEHNLLQQWSKLLQTFSELIKDKSVAAIVSSPTISQIEVVDALKKQLDENFFNFLALIAENKKMLIMPEIADQFESIKNIHNNVRVADVTLAYATDKNILDSLKTSLEKKFGCTIDMHINIDPAIIGGAVVKVGDTVIDSSVSGHLEKLKSILLS.

Belongs to the ATPase delta chain family. F-type ATPases have 2 components, F(1) - the catalytic core - and F(0) - the membrane proton channel. F(1) has five subunits: alpha(3), beta(3), gamma(1), delta(1), epsilon(1). F(0) has three main subunits: a(1), b(2) and c(10-14). The alpha and beta chains form an alternating ring which encloses part of the gamma chain. F(1) is attached to F(0) by a central stalk formed by the gamma and epsilon chains, while a peripheral stalk is formed by the delta and b chains.

It localises to the cell inner membrane. In terms of biological role, f(1)F(0) ATP synthase produces ATP from ADP in the presence of a proton or sodium gradient. F-type ATPases consist of two structural domains, F(1) containing the extramembraneous catalytic core and F(0) containing the membrane proton channel, linked together by a central stalk and a peripheral stalk. During catalysis, ATP synthesis in the catalytic domain of F(1) is coupled via a rotary mechanism of the central stalk subunits to proton translocation. This protein is part of the stalk that links CF(0) to CF(1). It either transmits conformational changes from CF(0) to CF(1) or is implicated in proton conduction. This Francisella tularensis subsp. tularensis (strain FSC 198) protein is ATP synthase subunit delta.